Reading from the N-terminus, the 752-residue chain is Photosystem I P700 chlorophyll a apoprotein A1 (752 aa).

8 consecutive transmembrane segments (helical) span residues 73–96, 159–182, 198–222, 294–312, 349–372, 388–414, 436–458, and 533–551; these read IFAAHFGHLAVVTIWLSGMIFHGA, LYCTAIGGLVLAGLFLFAGWFHYH, LNHHLQVLLGCGSLGWAGHLIHVSA, IAHHHLAIAVVFIIAGHQY, WHAQLATNLAFLGSLTIIIAHHMY, LCIFTHHIWIGGFLIVGGAAHAAIFMV, AIISHLNWVCIFLGFHSFGLYIH, and FLIHHIHAFTIHVTVLILL. [4Fe-4S] cluster is bound by residues C575 and C584. 2 helical membrane passes run 591 to 612 and 666 to 688; these read HVFLGLFWMYNSLSIVIFHFSW and LSAYGLMFLGAHFVWAFSLMFLF. Position 677 (H677) interacts with chlorophyll a'. Residues M685 and Y693 each contribute to the chlorophyll a site. W694 contacts phylloquinone. The helical transmembrane segment at 726–746 threads the bilayer; that stretch reads AVGVAHYLLGGIATTWAFFHA.

The protein belongs to the PsaA/PsaB family. The PsaA/B heterodimer binds the P700 chlorophyll special pair and subsequent electron acceptors. PSI consists of a core antenna complex that captures photons, and an electron transfer chain that converts photonic excitation into a charge separation. The cyanobacterial PSI reaction center is composed of one copy each of PsaA,B,C,D,E,F,I,J,K,L,M and X, and forms trimeric complexes. Requires PSI electron transfer chain: 5 chlorophyll a, 1 chlorophyll a', 2 phylloquinones and 3 4Fe-4S clusters. PSI core antenna: 90 chlorophyll a, 22 carotenoids, 3 phospholipids and 1 galactolipid. P700 is a chlorophyll a/chlorophyll a' dimer, A0 is one or more chlorophyll a, A1 is one or both phylloquinones and FX is a shared 4Fe-4S iron-sulfur center. as cofactor.

Its subcellular location is the cellular thylakoid membrane. It carries out the reaction reduced [plastocyanin] + hnu + oxidized [2Fe-2S]-[ferredoxin] = oxidized [plastocyanin] + reduced [2Fe-2S]-[ferredoxin]. Its function is as follows. PsaA and PsaB bind P700, the primary electron donor of photosystem I (PSI), as well as the electron acceptors A0, A1 and FX. PSI is a plastocyanin/cytochrome c6-ferredoxin oxidoreductase, converting photonic excitation into a charge separation, which transfers an electron from the donor P700 chlorophyll pair to the spectroscopically characterized acceptors A0, A1, FX, FA and FB in turn. Oxidized P700 is reduced on the lumenal side of the thylakoid membrane by plastocyanin or cytochrome c6. This Nostoc sp. (strain PCC 7120 / SAG 25.82 / UTEX 2576) protein is Photosystem I P700 chlorophyll a apoprotein A1.